We begin with the raw amino-acid sequence, 70 residues long: Large ribosomal subunit protein uL29 (70 aa).

This sequence belongs to the universal ribosomal protein uL29 family.

The chain is Large ribosomal subunit protein uL29 from Clostridium botulinum (strain ATCC 19397 / Type A).